Reading from the N-terminus, the 538-residue chain is Probable ribonuclease 3 (538 aa).

2 consecutive RNase III domains span residues 24-149 and 238-381; these read IKSY…LNFG and ASQM…EGYL. The DRBM domain occupies 408–477; it reads LISQNIEVLH…NYKDLILQLY (70 aa).

It belongs to the ribonuclease III family.

It carries out the reaction Endonucleolytic cleavage to 5'-phosphomonoester.. Functionally, digests double-stranded RNA. This chain is Probable ribonuclease 3, found in Acanthamoeba polyphaga (Amoeba).